The sequence spans 133 residues: UPF0146 protein MTH_1000 (133 aa).

It belongs to the UPF0146 family.

In Methanothermobacter thermautotrophicus (strain ATCC 29096 / DSM 1053 / JCM 10044 / NBRC 100330 / Delta H) (Methanobacterium thermoautotrophicum), this protein is UPF0146 protein MTH_1000.